The chain runs to 300 residues: Ribosomal RNA small subunit methyltransferase H (300 aa).

S-adenosyl-L-methionine-binding positions include 35-37 (GGH), aspartate 55, phenylalanine 82, aspartate 100, and glutamine 107.

This sequence belongs to the methyltransferase superfamily. RsmH family.

It is found in the cytoplasm. The enzyme catalyses cytidine(1402) in 16S rRNA + S-adenosyl-L-methionine = N(4)-methylcytidine(1402) in 16S rRNA + S-adenosyl-L-homocysteine + H(+). Functionally, specifically methylates the N4 position of cytidine in position 1402 (C1402) of 16S rRNA. This is Ribosomal RNA small subunit methyltransferase H from Chlamydia trachomatis serovar L2 (strain ATCC VR-902B / DSM 19102 / 434/Bu).